We begin with the raw amino-acid sequence, 408 residues long: Serine/threonine transporter SstT (408 aa).

The next 9 helical transmembrane spans lie at 11 to 31, 43 to 63, 82 to 102, 141 to 161, 192 to 212, 216 to 236, 290 to 310, 316 to 336, and 363 to 383; these read LANG…VSLA, FLGS…VFIL, IVVL…VLSM, ALMT…GLAL, IGIF…AIAG, LLAV…PLIV, IPLG…VLTL, LGIQ…AISA, and VAMQ…AAET.

Belongs to the dicarboxylate/amino acid:cation symporter (DAACS) (TC 2.A.23) family.

The protein resides in the cell inner membrane. The enzyme catalyses L-serine(in) + Na(+)(in) = L-serine(out) + Na(+)(out). It catalyses the reaction L-threonine(in) + Na(+)(in) = L-threonine(out) + Na(+)(out). Involved in the import of serine and threonine into the cell, with the concomitant import of sodium (symport system). The polypeptide is Serine/threonine transporter SstT (Shewanella sp. (strain ANA-3)).